The sequence spans 457 residues: Argininosuccinate lyase (457 aa).

The protein belongs to the lyase 1 family. Argininosuccinate lyase subfamily.

Its subcellular location is the cytoplasm. The enzyme catalyses 2-(N(omega)-L-arginino)succinate = fumarate + L-arginine. The protein operates within amino-acid biosynthesis; L-arginine biosynthesis; L-arginine from L-ornithine and carbamoyl phosphate: step 3/3. This is Argininosuccinate lyase from Serratia proteamaculans (strain 568).